Here is a 143-residue protein sequence, read N- to C-terminus: Nucleoside diphosphate kinase (143 aa).

ATP is bound by residues lysine 11, phenylalanine 59, arginine 87, threonine 93, arginine 104, and asparagine 114. The active-site Pros-phosphohistidine intermediate is histidine 117.

The protein belongs to the NDK family. Homotetramer. The cofactor is Mg(2+).

The protein localises to the cytoplasm. It carries out the reaction a 2'-deoxyribonucleoside 5'-diphosphate + ATP = a 2'-deoxyribonucleoside 5'-triphosphate + ADP. The enzyme catalyses a ribonucleoside 5'-diphosphate + ATP = a ribonucleoside 5'-triphosphate + ADP. Functionally, major role in the synthesis of nucleoside triphosphates other than ATP. The ATP gamma phosphate is transferred to the NDP beta phosphate via a ping-pong mechanism, using a phosphorylated active-site intermediate. The chain is Nucleoside diphosphate kinase from Enterobacter sp. (strain 638).